We begin with the raw amino-acid sequence, 148 residues long: ATP synthase epsilon chain (148 aa).

It belongs to the ATPase epsilon chain family. As to quaternary structure, F-type ATPases have 2 components, CF(1) - the catalytic core - and CF(0) - the membrane proton channel. CF(1) has five subunits: alpha(3), beta(3), gamma(1), delta(1), epsilon(1). CF(0) has three main subunits: a, b and c.

The protein localises to the cell membrane. Functionally, produces ATP from ADP in the presence of a proton gradient across the membrane. In Streptococcus thermophilus (strain ATCC BAA-491 / LMD-9), this protein is ATP synthase epsilon chain.